The primary structure comprises 445 residues: MSKKLYIKTYGCQMNVYDSVKIQDLLYPFGYESTEDIKEADIIILNTCHIREKAAEKTYSELGRIKKLQNTRKQEGLNPAIIVVAGCVAQAEGEVIFTRTPYVDIVVGPQSYYNLPELISKVVRHEKHLIDLDFVEEAKFDNLPEQLYTQGASSFISVQEGCDKFCTFCVVPYTRGAEFSRSVEQVYRESLKVVSNDTKEIILLGQNVNAYHGKGPKDKIFTLADLLKHLAQIPNLERLRYMTSHPIDMTDDLIKLHGTEPKLMPFLHLPVQSGSNKILKAMNRKHDRDYYFNIINRLREARSDIVLSSDFIVGFPGETEKDFEDTLDLVQRVKYGQCYSFKYSPRPGTPGAIRTDQIPEHIKSKRLTILQKELATQQLAFNESCVGSTMKVLFDRDGKFEDQIIGKTPYMQSVYIHNPNKSLLGKIVDVIITKAALNSLTGEIL.

The 122-residue stretch at 3–124 (KKLYIKTYGC…LPELISKVVR (122 aa)) folds into the MTTase N-terminal domain. Cysteine 12, cysteine 48, cysteine 87, cysteine 162, cysteine 166, and cysteine 169 together coordinate [4Fe-4S] cluster. One can recognise a Radical SAM core domain in the interval 148–380 (YTQGASSFIS…QKELATQQLA (233 aa)). Residues 383 to 445 (ESCVGSTMKV…ALNSLTGEIL (63 aa)) enclose the TRAM domain.

This sequence belongs to the methylthiotransferase family. MiaB subfamily. As to quaternary structure, monomer. [4Fe-4S] cluster is required as a cofactor.

It localises to the cytoplasm. It catalyses the reaction N(6)-dimethylallyladenosine(37) in tRNA + (sulfur carrier)-SH + AH2 + 2 S-adenosyl-L-methionine = 2-methylsulfanyl-N(6)-dimethylallyladenosine(37) in tRNA + (sulfur carrier)-H + 5'-deoxyadenosine + L-methionine + A + S-adenosyl-L-homocysteine + 2 H(+). In terms of biological role, catalyzes the methylthiolation of N6-(dimethylallyl)adenosine (i(6)A), leading to the formation of 2-methylthio-N6-(dimethylallyl)adenosine (ms(2)i(6)A) at position 37 in tRNAs that read codons beginning with uridine. The polypeptide is tRNA-2-methylthio-N(6)-dimethylallyladenosine synthase (Rickettsia typhi (strain ATCC VR-144 / Wilmington)).